The chain runs to 774 residues: Ion-translocating oxidoreductase complex subunit C (774 aa).

2 consecutive 4Fe-4S ferredoxin-type domains span residues 369-397 (GEPQEEQSCIRCSACADACPADLLPQQLY) and 407-436 (KATTHNIADCIECGACAWVCPSNIPLVQYF). [4Fe-4S] cluster contacts are provided by Cys-377, Cys-380, Cys-383, Cys-387, Cys-416, Cys-419, Cys-422, and Cys-426. The interval 602–750 (KLEQQQANAE…EPEEQIDPRK (149 aa)) is disordered.

Belongs to the 4Fe4S bacterial-type ferredoxin family. RnfC subfamily. The complex is composed of six subunits: RsxA, RsxB, RsxC, RsxD, RsxE and RsxG. It depends on [4Fe-4S] cluster as a cofactor.

It is found in the cell inner membrane. Its function is as follows. Part of a membrane-bound complex that couples electron transfer with translocation of ions across the membrane. Required to maintain the reduced state of SoxR. This chain is Ion-translocating oxidoreductase complex subunit C, found in Escherichia coli O6:K15:H31 (strain 536 / UPEC).